Reading from the N-terminus, the 359-residue chain is Src kinase-associated phosphoprotein 1 (359 aa).

The region spanning 107–210 (NVIKQGYLEK…WVDQISFLLK (104 aa)) is the PH domain. Residues Tyr142, Tyr219, and Tyr232 each carry the phosphotyrosine modification. Positions 219–237 (YEEDEEEEEKEETYDDIDG) are enriched in acidic residues. Residues 219 to 239 (YEEDEEEEEKEETYDDIDGFD) form a disordered region. 2 positions are modified to phosphotyrosine; by FYN: Tyr271 and Tyr295. Residues 290–295 (RKGVDY) are interaction with FYB1. The SH3 domain occupies 294-355 (DYASYYQGLW…PKEYLTTAFE (62 aa)).

Belongs to the SKAP family. Homodimer. Interacts with FYN. Interacts with PTPRC. Interacts with GRB2 when phosphorylated on Tyr-271. Interacts with FYB1, which is required for SKAP2 protein stability. Part of a complex consisting of SKAP1, FYB1 and CLNK. Interacts with RASGRP1. Interacts with FYB2. Post-translationally, phosphorylated on tyrosines. Phosphorylation by FYN on Tyr-271 is required for GRB2 interaction. Phosphorylation by FYN on Tyr-295 abolishes interaction with FYB1. Tyr-232 is dephosphorylated by PTPRC. As to expression, highly expressed in thymocytes and peripheral blood lymphocytes. Also expressed in spleen cells and testis. Present in T-cells (at protein level).

It localises to the cytoplasm. The protein localises to the nucleus. The protein resides in the cell membrane. In terms of biological role, positively regulates T-cell receptor signaling by enhancing the MAP kinase pathway. Required for optimal conjugation between T-cells and antigen-presenting cells by promoting the clustering of integrin ITGAL on the surface of T-cells. May be involved in high affinity immunoglobulin epsilon receptor signaling in mast cells. The sequence is that of Src kinase-associated phosphoprotein 1 (SKAP1) from Homo sapiens (Human).